The sequence spans 378 residues: Anhydro-N-acetylmuramic acid kinase (378 aa).

9-16 (GTSADGID) contacts ATP.

Belongs to the anhydro-N-acetylmuramic acid kinase family.

It carries out the reaction 1,6-anhydro-N-acetyl-beta-muramate + ATP + H2O = N-acetyl-D-muramate 6-phosphate + ADP + H(+). It functions in the pathway amino-sugar metabolism; 1,6-anhydro-N-acetylmuramate degradation. It participates in cell wall biogenesis; peptidoglycan recycling. Catalyzes the specific phosphorylation of 1,6-anhydro-N-acetylmuramic acid (anhMurNAc) with the simultaneous cleavage of the 1,6-anhydro ring, generating MurNAc-6-P. Is required for the utilization of anhMurNAc either imported from the medium or derived from its own cell wall murein, and thus plays a role in cell wall recycling. This chain is Anhydro-N-acetylmuramic acid kinase, found in Synechococcus elongatus (strain ATCC 33912 / PCC 7942 / FACHB-805) (Anacystis nidulans R2).